Reading from the N-terminus, the 469-residue chain is Neuraminidase (469 aa).

Residues 1 to 9 (MNPNQKIIT) are Intravirion-facing. The chain crosses the membrane as a helical span at residues 10 to 30 (IGSVSLTIATVCFLMQIAILV). Residues 11 to 33 (GSVSLTIATVCFLMQIAILVTTV) form an involved in apical transport and lipid raft association region. Over 31 to 469 (TTVTLHFKQH…DGANINFMPI (439 aa)) the chain is Virion surface. Residues 36–88 (HFKQHECDSPASNQVMPCEPIIIERNITEIVYLNNTTIEKEICPKVVEYRNWS) are hypervariable stalk region. Asparagine 61, asparagine 69, asparagine 70, and asparagine 86 each carry an N-linked (GlcNAc...) asparagine; by host glycan. The tract at residues 91–469 (QCQITGFAPF…DGANINFMPI (379 aa)) is head of neuraminidase. 9 cysteine pairs are disulfide-bonded: cysteine 92–cysteine 417, cysteine 124–cysteine 129, cysteine 175–cysteine 193, cysteine 183–cysteine 230, cysteine 232–cysteine 237, cysteine 278–cysteine 291, cysteine 280–cysteine 289, cysteine 318–cysteine 337, and cysteine 421–cysteine 447. A substrate-binding site is contributed by arginine 118. A glycan (N-linked (GlcNAc...) asparagine; by host) is linked at asparagine 146. Catalysis depends on aspartate 151, which acts as the Proton donor/acceptor. Arginine 152 serves as a coordination point for substrate. 2 N-linked (GlcNAc...) asparagine; by host glycosylation sites follow: asparagine 200 and asparagine 234. Position 276 to 277 (276 to 277 (EE)) interacts with substrate. A substrate-binding site is contributed by arginine 292. 3 residues coordinate Ca(2+): aspartate 293, glycine 297, and aspartate 324. Residues 324 to 349 (DTPRNDDRSSNSNCRNPNNERGTQGV) form a disordered region. Residues 333–342 (SNSNCRNPNN) show a composition bias toward low complexity. Glycine 345, threonine 346, and glutamine 347 together coordinate Ca(2+). Arginine 371 is a substrate binding site. The N-linked (GlcNAc...) asparagine; by host glycan is linked to asparagine 402. Tyrosine 406 (nucleophile) is an active-site residue.

This sequence belongs to the glycosyl hydrolase 34 family. Homotetramer. Requires Ca(2+) as cofactor. In terms of processing, N-glycosylated.

The protein localises to the virion membrane. Its subcellular location is the host apical cell membrane. It carries out the reaction Hydrolysis of alpha-(2-&gt;3)-, alpha-(2-&gt;6)-, alpha-(2-&gt;8)- glycosidic linkages of terminal sialic acid residues in oligosaccharides, glycoproteins, glycolipids, colominic acid and synthetic substrates.. Inhibited by the neuraminidase inhibitors zanamivir (Relenza) and oseltamivir (Tamiflu). These drugs interfere with the release of progeny virus from infected cells and are effective against all influenza strains. Resistance to neuraminidase inhibitors is quite rare. Functionally, catalyzes the removal of terminal sialic acid residues from viral and cellular glycoconjugates. Cleaves off the terminal sialic acids on the glycosylated HA during virus budding to facilitate virus release. Additionally helps virus spread through the circulation by further removing sialic acids from the cell surface. These cleavages prevent self-aggregation and ensure the efficient spread of the progeny virus from cell to cell. Otherwise, infection would be limited to one round of replication. Described as a receptor-destroying enzyme because it cleaves a terminal sialic acid from the cellular receptors. May facilitate viral invasion of the upper airways by cleaving the sialic acid moieties on the mucin of the airway epithelial cells. Likely to plays a role in the budding process through its association with lipid rafts during intracellular transport. May additionally display a raft-association independent effect on budding. Plays a role in the determination of host range restriction on replication and virulence. Sialidase activity in late endosome/lysosome traffic seems to enhance virus replication. The sequence is that of Neuraminidase from Aves (Human).